A 428-amino-acid polypeptide reads, in one-letter code: Serine--tRNA ligase (428 aa).

L-serine is bound at residue 235 to 237 (TAE). 266–268 (RSE) is a binding site for ATP. An L-serine-binding site is contributed by E289. 353 to 356 (EISS) lines the ATP pocket. S389 is a binding site for L-serine.

It belongs to the class-II aminoacyl-tRNA synthetase family. Type-1 seryl-tRNA synthetase subfamily. In terms of assembly, homodimer. The tRNA molecule binds across the dimer.

It localises to the cytoplasm. The enzyme catalyses tRNA(Ser) + L-serine + ATP = L-seryl-tRNA(Ser) + AMP + diphosphate + H(+). The catalysed reaction is tRNA(Sec) + L-serine + ATP = L-seryl-tRNA(Sec) + AMP + diphosphate + H(+). It participates in aminoacyl-tRNA biosynthesis; selenocysteinyl-tRNA(Sec) biosynthesis; L-seryl-tRNA(Sec) from L-serine and tRNA(Sec): step 1/1. In terms of biological role, catalyzes the attachment of serine to tRNA(Ser). Is also able to aminoacylate tRNA(Sec) with serine, to form the misacylated tRNA L-seryl-tRNA(Sec), which will be further converted into selenocysteinyl-tRNA(Sec). This is Serine--tRNA ligase from Shewanella oneidensis (strain ATCC 700550 / JCM 31522 / CIP 106686 / LMG 19005 / NCIMB 14063 / MR-1).